We begin with the raw amino-acid sequence, 252 residues long: Small ribosomal subunit protein uS2B (252 aa).

Serine 2 carries the N-acetylserine modification. Acidic residues-rich tracts occupy residues 213-229 (VAEE…EEVK) and 241-252 (EWAEENADNVEW). Residues 213-252 (VAEEAAAAEEGEEEEVKEEVTEGQAEATEWAEENADNVEW) are disordered.

The protein belongs to the universal ribosomal protein uS2 family. As to quaternary structure, component of the small ribosomal subunit. Mature ribosomes consist of a small (40S) and a large (60S) subunit. The 40S subunit contains about 33 different proteins and 1 molecule of RNA (18S). The 60S subunit contains about 49 different proteins and 3 molecules of RNA (25S, 5.8S and 5S). Interacts with RPS21.

Its subcellular location is the cytoplasm. In terms of biological role, required for the assembly and/or stability of the 40S ribosomal subunit. Required for the processing of the 20S rRNA-precursor to mature 18S rRNA in a late step of the maturation of 40S ribosomal subunits. This Saccharomyces cerevisiae (strain RM11-1a) (Baker's yeast) protein is Small ribosomal subunit protein uS2B.